The following is a 156-amino-acid chain: Small ribosomal subunit protein uS7 (156 aa).

The protein belongs to the universal ribosomal protein uS7 family. Part of the 30S ribosomal subunit. Contacts proteins S9 and S11.

Functionally, one of the primary rRNA binding proteins, it binds directly to 16S rRNA where it nucleates assembly of the head domain of the 30S subunit. Is located at the subunit interface close to the decoding center, probably blocks exit of the E-site tRNA. The chain is Small ribosomal subunit protein uS7 from Clostridium beijerinckii (strain ATCC 51743 / NCIMB 8052) (Clostridium acetobutylicum).